Here is a 416-residue protein sequence, read N- to C-terminus: (S)-ureidoglycine--glyoxylate transaminase (416 aa).

The residue at position 198 (Lys198) is an N6-(pyridoxal phosphate)lysine.

Belongs to the class-V pyridoxal-phosphate-dependent aminotransferase family. In terms of assembly, homodimer. The cofactor is pyridoxal 5'-phosphate.

The catalysed reaction is (S)-2-ureidoglycine + glyoxylate = N-carbamoyl-2-oxoglycine + glycine. The protein operates within nitrogen metabolism; (S)-allantoin degradation. Catalyzes the transamination between an unstable intermediate ((S)-ureidoglycine) and the end product of purine catabolism (glyoxylate) to yield oxalurate and glycine. Glyoxylate is the preferred substrate, but other amino-group acceptors can be used. This is (S)-ureidoglycine--glyoxylate transaminase from Bacillus subtilis (strain 168).